We begin with the raw amino-acid sequence, 160 residues long: Transcription antitermination protein NusB (160 aa).

The protein belongs to the NusB family.

In terms of biological role, involved in transcription antitermination. Required for transcription of ribosomal RNA (rRNA) genes. Binds specifically to the boxA antiterminator sequence of the ribosomal RNA (rrn) operons. This chain is Transcription antitermination protein NusB, found in Nitrobacter hamburgensis (strain DSM 10229 / NCIMB 13809 / X14).